A 319-amino-acid polypeptide reads, in one-letter code: tRNA pseudouridine synthase B (319 aa).

D49 serves as the catalytic Nucleophile.

Belongs to the pseudouridine synthase TruB family. Type 1 subfamily.

The enzyme catalyses uridine(55) in tRNA = pseudouridine(55) in tRNA. Its function is as follows. Responsible for synthesis of pseudouridine from uracil-55 in the psi GC loop of transfer RNAs. In Bartonella henselae (strain ATCC 49882 / DSM 28221 / CCUG 30454 / Houston 1) (Rochalimaea henselae), this protein is tRNA pseudouridine synthase B.